The primary structure comprises 122 residues: Allatotropin (122 aa).

A signal peptide spans 1–23 (MRVILAITLLFVAGSFIATASKG). A propeptide spanning residues 24 to 40 (RNYPRFFKHRMKLREIR) is cleaved from the precursor. A Phenylalanine amide modification is found at Phe-53. Residues 57-122 (ESPAERIPDL…GDDSKKGTIA (66 aa)) constitute a propeptide that is removed on maturation.

Expressed in brain and ventral ganglia but not in the retrocerebral complex (at protein level).

The protein localises to the secreted. In terms of biological role, neuropeptide stimulator of juvenile hormone synthesis. This Camponotus floridanus (Florida carpenter ant) protein is Allatotropin.